The following is a 286-amino-acid chain: 33 kDa chaperonin (286 aa).

2 disulfide bridges follow: Cys233–Cys235 and Cys267–Cys270.

It belongs to the HSP33 family. Under oxidizing conditions two disulfide bonds are formed involving the reactive cysteines. Under reducing conditions zinc is bound to the reactive cysteines and the protein is inactive.

The protein localises to the cytoplasm. Its function is as follows. Redox regulated molecular chaperone. Protects both thermally unfolding and oxidatively damaged proteins from irreversible aggregation. Plays an important role in the bacterial defense system toward oxidative stress. This is 33 kDa chaperonin from Histophilus somni (strain 129Pt) (Haemophilus somnus).